We begin with the raw amino-acid sequence, 769 residues long: TSC22 domain family protein 2 (769 aa).

4 disordered regions span residues 20 to 86 (AQVA…TVSP), 224 to 292 (HGLD…PQPM), 334 to 353 (AQPG…YPQP), and 520 to 563 (VPAP…SLPQ). Over residues 28 to 37 (EDTESLDDPD) the composition is skewed to acidic residues. Positions 229 to 252 (GTDSSLTAVSQLPPSEKMSQPTLA) are enriched in polar residues. Over residues 269-279 (GGAVAPSSASL) the composition is skewed to low complexity. Low complexity predominate over residues 531 to 541 (SSHTPVSRSSS). Polar residues predominate over residues 542–563 (VIQQVGSPLAQGTHSAPTSLPQ). Positions 691–725 (MYAVREEVEVLKEQIKELVERNSLLERENALLKSL) form a coiled coil. The segment covering 726 to 745 (SNNDQLSQLPAQQANPGSTS) has biased composition (polar residues). The disordered stretch occupies residues 726-769 (SNNDQLSQLPAQQANPGSTSQQQAMIAQPPQPTQPPQQPNVSSA). Residues 754-763 (PPQPTQPPQQ) are compositionally biased toward pro residues.

Belongs to the TSC-22/Dip/Bun family. As to quaternary structure, interacts with NRBP1. Interacts with PKM isoform M2; the interaction results in reduced nuclear levels of PKM isoform M2, leading to repression of cyclin CCND1 transcription and reduced cell growth. Interacts with WDR77. Expressed in the cortex, medulla and papilla of the kidney. As to expression, expressed in the kidney.

Reduces the level of nuclear PKM isoform M2 which results in repression of cyclin CCND1 transcription and reduced cell growth. In terms of biological role, may protect kidney cells from hyperosmotic stress. In Mus musculus (Mouse), this protein is TSC22 domain family protein 2.